Consider the following 385-residue polypeptide: Chaperone protein DnaJ (385 aa).

The 66-residue stretch at 5–70 (DFYEVLGVSR…QKKAAYDQYG (66 aa)) folds into the J domain. Residues 137-214 (GVSKEIEVPT…CHGQGRKQKT (78 aa)) form a CR-type zinc finger. Zn(2+)-binding residues include cysteine 150, cysteine 153, cysteine 167, cysteine 170, cysteine 189, cysteine 192, cysteine 202, and cysteine 205. 4 CXXCXGXG motif repeats span residues 150–157 (CDTCDGSG), 167–174 (CGTCHGHG), 189–196 (CPTCHGKG), and 202–209 (CNECHGQG).

This sequence belongs to the DnaJ family. In terms of assembly, homodimer. The cofactor is Zn(2+).

The protein resides in the cytoplasm. In terms of biological role, participates actively in the response to hyperosmotic and heat shock by preventing the aggregation of stress-denatured proteins and by disaggregating proteins, also in an autonomous, DnaK-independent fashion. Unfolded proteins bind initially to DnaJ; upon interaction with the DnaJ-bound protein, DnaK hydrolyzes its bound ATP, resulting in the formation of a stable complex. GrpE releases ADP from DnaK; ATP binding to DnaK triggers the release of the substrate protein, thus completing the reaction cycle. Several rounds of ATP-dependent interactions between DnaJ, DnaK and GrpE are required for fully efficient folding. Also involved, together with DnaK and GrpE, in the DNA replication of plasmids through activation of initiation proteins. This chain is Chaperone protein DnaJ, found in Vibrio harveyi (Beneckea harveyi).